A 234-amino-acid polypeptide reads, in one-letter code: Homeobox protein ceh-51 (234 aa).

Disordered stretches follow at residues Pro-128 to Phe-154 and Gln-209 to Ser-234. A DNA-binding region (homeobox) is located at residues Arg-147 to Lys-206. A compositionally biased stretch (basic and acidic residues) spans Ser-220–Ser-234.

The protein belongs to the NK-2 homeobox family.

It is found in the nucleus. Functionally, required for mesoderm development, including specification of muscle and coelomocyte precursors. This Caenorhabditis elegans protein is Homeobox protein ceh-51.